Here is a 504-residue protein sequence, read N- to C-terminus: Sodium-coupled neutral amino acid symporter 2 (504 aa).

Residues 1-22 form a disordered region; sequence MKKTEMGRFNISPDEDSSSYSS. At 1–76 the chain is on the cytoplasmic side; that stretch reads MKKTEMGRFN…HPGTTSFGMS (76 aa). The regulates protein turnover upon amino acid deprivation stretch occupies residues 1 to 96; it reads MKKTEMGRFN…SGILGLSYAM (96 aa). A phosphoserine mark is found at S12, S21, S22, and S55. A helical membrane pass occupies residues 77-96; the sequence is VFNLSNAIVGSGILGLSYAM. N82 contributes to the Na(+) binding site. Residues 97–102 are Extracellular-facing; it reads ANTGIA. A helical transmembrane segment spans residues 103-123; that stretch reads LFIILLTFVSIFSLYSVHLLL. Residues 124–158 lie on the Cytoplasmic side of the membrane; the sequence is KTANEGGSLLYEQLGHKAYGLAGKLAASGSITMQN. Residues 159–177 form a helical membrane-spanning segment; it reads IGAMSSYLFIVKYELPLVI. Topologically, residues 178-188 are extracellular; sequence KALMNIEDTNG. The helical transmembrane segment at 189–209 threads the bilayer; sequence LWYLNGDYLVLLVSFVLILPL. At 210-217 the chain is on the cytoplasmic side; the sequence is SLLRNLGY. A helical transmembrane segment spans residues 218 to 238; that stretch reads LGYTSGLSLLCMIFFLIVVIC. Residues 239-290 lie on the Extracellular side of the membrane; that stretch reads KKFQIPCPVEVALMANETVNGTFTQVALAALASNSTAADTCRPRYFIFNSQT. A disulfide bond links C245 and C279. Residues N254, N258, and N272 are each glycosylated (N-linked (GlcNAc...) asparagine). A helical membrane pass occupies residues 291–311; it reads VYAVPILTFSFVCHPAVLPIY. Residues 312–327 are Cytoplasmic-facing; the sequence is EELKSRSRRRMMNVSK. The helical transmembrane segment at 328–348 threads the bilayer; that stretch reads ISFFAMFLMYLLAALFGYLTF. The Extracellular segment spans residues 349–369; the sequence is YEHVESELLHTYSAIVGTDIL. The helical transmembrane segment at 370 to 390 threads the bilayer; sequence LLVVRLAVLVAVTLTVPVVIF. T384 provides a ligand contact to Na(+). The Cytoplasmic segment spans residues 391–411; the sequence is PIRSSVTHLLCPTKEFSWFRH. Residues 412 to 432 traverse the membrane as a helical segment; the sequence is SVITVTILAFTNLLVIFVPTI. Over 433–434 the chain is Extracellular; that stretch reads RD. Residues 435 to 455 form a helical membrane-spanning segment; sequence IFGFIGASAAAMLIFILPSAF. At 456–470 the chain is on the cytoplasmic side; sequence YIKLVKKEPMRSVQK. Residues 471–493 form a helical membrane-spanning segment; sequence IGALCFLLSGVVVMIGSMGLIVL. Topologically, residues 494 to 504 are extracellular; sequence DWVHDASAGGH.

It belongs to the amino acid/polyamine transporter 2 family. In terms of processing, polyubiquitination by NEDD4L regulates the degradation and the activity of SLC38A2. As to expression, widely expressed. Expressed in skeletal muscle and adipose tissue (at protein level). Expressed by glutamatergic and GABAergic neurons together with astrocytes and other non-neuronal cells in the cerebral cortex (at protein level). Widely expressed in the central nervous systeme where, it is enriched in the spinal cord and the brainstem nuclei, especially those of the auditory system.

It localises to the cell membrane. The catalysed reaction is L-alanine(in) + Na(+)(in) = L-alanine(out) + Na(+)(out). It carries out the reaction glycine(in) + Na(+)(in) = glycine(out) + Na(+)(out). It catalyses the reaction L-serine(in) + Na(+)(in) = L-serine(out) + Na(+)(out). The enzyme catalyses L-proline(in) + Na(+)(in) = L-proline(out) + Na(+)(out). The catalysed reaction is L-methionine(in) + Na(+)(in) = L-methionine(out) + Na(+)(out). It carries out the reaction L-histidine(in) + Na(+)(in) = L-histidine(out) + Na(+)(out). It catalyses the reaction L-asparagine(in) + Na(+)(in) = L-asparagine(out) + Na(+)(out). The enzyme catalyses L-glutamine(in) + Na(+)(in) = L-glutamine(out) + Na(+)(out). The catalysed reaction is L-threonine(in) + Na(+)(in) = L-threonine(out) + Na(+)(out). It carries out the reaction L-leucine(in) + Na(+)(in) = L-leucine(out) + Na(+)(out). It catalyses the reaction L-phenylalanine(in) + Na(+)(in) = L-phenylalanine(out) + Na(+)(out). With respect to regulation, inhibited by N-methyl-D-glucamine. Inhibited by choline. Allosteric regulation of sodium ions binding by pH. Its function is as follows. Symporter that cotransports neutral amino acids and sodium ions from the extracellular to the intracellular side of the cell membrane. The transport is pH-sensitive, Li(+)-intolerant, electrogenic, driven by the Na(+) electrochemical gradient and cotransports of neutral amino acids and sodium ions with a stoichiometry of 1:1. May function in the transport of amino acids at the blood-brain barrier. May function in the transport of amino acids in the supply of maternal nutrients to the fetus through the placenta. Maintains a key metabolic glutamine/glutamate balance underpinning retrograde signaling by dendritic release of the neurotransmitter glutamate. Transports L-proline in differentiating osteoblasts for the efficient synthesis of proline-enriched proteins and provides proline essential for osteoblast differentiation and bone formation during bone development. The polypeptide is Sodium-coupled neutral amino acid symporter 2 (Rattus norvegicus (Rat)).